We begin with the raw amino-acid sequence, 1729 residues long: 1,3-beta-glucan synthase component bgs1 (1729 aa).

The residue at position 23 (Ser23) is a Phosphoserine. 6 consecutive transmembrane segments (helical) span residues 378 to 398 (WTACGLAGAIASFITLAAVVF), 416 to 436 (SMLLLISTLLLNIAPVVFIFA), 448 to 468 (LVVGIVHFFFSLVCVVYYSIT), 503 to 523 (FVSWCLWITVLVAKFLESYFF), 546 to 566 (YILGAGLCKAQPKILLSLLYL), and 577 to 597 (YLWYILISTIYSLAYAFCLGI). 2 positions are modified to phosphoserine: Ser784 and Ser788. Transmembrane regions (helical) follow at residues 1180–1200 (MVIMFSLQLLMLVIINLGAMY), 1237–1257 (ILSIFIVFGIAFVPLAVCELG), 1337–1357 (MLLFGSITAWLPHYIYFWITL), 1440–1460 (YGEILGPLGTLFFTCIPFLFI), 1484–1504 (VAPLVLSAIIAFFFFCLGIML), 1515–1535 (YGVYLAGVAHFLFVCVDVVVF), 1550–1572 (LLGFVAIISIHRFAHKFFIICFL), and 1678–1698 (ATLYFSLFIAFFVLLILPFVF).

This sequence belongs to the glycosyltransferase 48 family. As to quaternary structure, component of the 1,3-beta-glucan synthase (GS) complex, composed of at least the alternate catalytic subunits bgs1, bgs2, bgs3, and bgs4, and a regulatory subunit chr4.

The protein localises to the cell membrane. It is found in the cell septum. The catalysed reaction is [(1-&gt;3)-beta-D-glucosyl](n) + UDP-alpha-D-glucose = [(1-&gt;3)-beta-D-glucosyl](n+1) + UDP + H(+). Its function is as follows. Alternate catalytic subunit of the 1,3-beta-glucan synthase (GS) complex. Synthesizes 1,3-beta-glucan, a major structural component of the fungal cell wall. Required for the assembly of the division septum and maintenance of cell polarity. The sequence is that of 1,3-beta-glucan synthase component bgs1 (bgs1) from Schizosaccharomyces pombe (strain 972 / ATCC 24843) (Fission yeast).